We begin with the raw amino-acid sequence, 351 residues long: Uroporphyrinogen decarboxylase (351 aa).

Residues 25–29, D74, Y151, S206, and H325 contribute to the substrate site; that span reads RQAGR.

The protein belongs to the uroporphyrinogen decarboxylase family. As to quaternary structure, homodimer.

It is found in the cytoplasm. It catalyses the reaction uroporphyrinogen III + 4 H(+) = coproporphyrinogen III + 4 CO2. It functions in the pathway porphyrin-containing compound metabolism; protoporphyrin-IX biosynthesis; coproporphyrinogen-III from 5-aminolevulinate: step 4/4. Functionally, catalyzes the decarboxylation of four acetate groups of uroporphyrinogen-III to yield coproporphyrinogen-III. The polypeptide is Uroporphyrinogen decarboxylase (Chlorobium chlorochromatii (strain CaD3)).